Reading from the N-terminus, the 535-residue chain is D-2-hydroxyglutarate dehydrogenase, mitochondrial (535 aa).

A mitochondrion-targeting transit peptide spans 1–50; it reads MVLHLVPRWSASLFRASPRWKKTYSQRASAQLKWLGCPRSVYSPLACRAY. The region spanning 110–289 is the FAD-binding PCMH-type domain; it reads VRGCSKVLLR…TAVSIVCPPR (180 aa). Residue Lys-115 is modified to N6-succinyllysine. (R)-2-hydroxyglutarate-binding residues include Arg-400, Thr-404, and Lys-415. Arg-400 serves as a coordination point for (R)-lactate. Residues Arg-400, Thr-404, and Lys-415 each contribute to the (R)-malate site. Positions 448 and 455 each coordinate Zn(2+). Asn-457 contributes to the (R)-2-hydroxyglutarate binding site. Glu-489 lines the Zn(2+) pocket. Position 490 (His-490) interacts with (R)-2-hydroxyglutarate. His-490 contacts (R)-lactate. His-490 provides a ligand contact to (R)-malate.

This sequence belongs to the FAD-binding oxidoreductase/transferase type 4 family. FAD is required as a cofactor.

It is found in the mitochondrion. It catalyses the reaction (R)-2-hydroxyglutarate + A = 2-oxoglutarate + AH2. It carries out the reaction (R)-malate + A = oxaloacetate + AH2. Activated by zinc, cobalt and manganese ions. Inhibited by EDTA. Its function is as follows. Catalyzes the oxidation of D-2-hydroxyglutarate (D-2-HG) to alpha-ketoglutarate. Also catalyzes the oxidation of other D-2-hydroxyacids, such as D-malate (D-MAL) and D-lactate (D-LAC). Exhibits high activities towards D-2-HG and D-MAL but a very weak activity towards D-LAC. The chain is D-2-hydroxyglutarate dehydrogenase, mitochondrial from Rattus norvegicus (Rat).